Reading from the N-terminus, the 36-residue chain is uncharacterized protein (36 aa).

This is an uncharacterized protein from Saccharomyces cerevisiae (strain ATCC 204508 / S288c) (Baker's yeast).